The following is a 436-amino-acid chain: Glutamate-1-semialdehyde 2,1-aminomutase (436 aa).

An N6-(pyridoxal phosphate)lysine modification is found at Lys-270.

Belongs to the class-III pyridoxal-phosphate-dependent aminotransferase family. HemL subfamily. In terms of assembly, homodimer. It depends on pyridoxal 5'-phosphate as a cofactor.

The protein localises to the cytoplasm. The catalysed reaction is (S)-4-amino-5-oxopentanoate = 5-aminolevulinate. It participates in porphyrin-containing compound metabolism; protoporphyrin-IX biosynthesis; 5-aminolevulinate from L-glutamyl-tRNA(Glu): step 2/2. The polypeptide is Glutamate-1-semialdehyde 2,1-aminomutase (Cutibacterium acnes (strain DSM 16379 / KPA171202) (Propionibacterium acnes)).